Consider the following 319-residue polypeptide: NH(3)-dependent NAD(+) synthetase (319 aa).

ATP is bound at residue 33–40 (GLSGGIDS). Residue Asp-39 coordinates Mg(2+). Arg-169 is a binding site for deamido-NAD(+). Thr-189 is a binding site for ATP. Glu-194 provides a ligand contact to Mg(2+). Deamido-NAD(+)-binding residues include Lys-202 and Asp-209. The ATP site is built by Lys-218 and Thr-240.

Belongs to the NAD synthetase family. Homodimer.

The enzyme catalyses deamido-NAD(+) + NH4(+) + ATP = AMP + diphosphate + NAD(+) + H(+). It functions in the pathway cofactor biosynthesis; NAD(+) biosynthesis; NAD(+) from deamido-NAD(+) (ammonia route): step 1/1. Its function is as follows. Catalyzes the ATP-dependent amidation of deamido-NAD to form NAD. Uses ammonia as a nitrogen source. This chain is NH(3)-dependent NAD(+) synthetase, found in Mesorhizobium japonicum (strain LMG 29417 / CECT 9101 / MAFF 303099) (Mesorhizobium loti (strain MAFF 303099)).